The following is a 225-amino-acid chain: DNA-binding response regulator MtrA (225 aa).

A Response regulatory domain is found at 4–117 (RILVVDDDAS…ELVARVRARL (114 aa)). Position 53 is a 4-aspartylphosphate (D53). A DNA-binding region (ompR/PhoB-type) is located at residues 125 to 224 (AEMLSIADVD…VRGVGYKAGP (100 aa)).

Phosphorylated by MtrB.

Its function is as follows. Member of the two-component regulatory system MtrA/MtrB. In Mycobacterium leprae (strain TN), this protein is DNA-binding response regulator MtrA (mtrA).